The sequence spans 448 residues: MLHRYLPMTEEDKQQMLQTIGVQSIDELFSDIPESVRFQGEYNIKPAKSEPELMKELMALAAKNADMKTHTSFLGAGVYDHYIPTIVDHVISRSEFYTAYTPYQPEISQGELQAIFEFQTMICELTGMDVANSSMYDGGTALAEAALLSAAHTKKKKVLLSNAVHPEYRDVVKTYAKGPGLEVVEIPYKNGVTDLAALQAEMNEDVACVIVQYPNFFGQIEPLKDIEPIAHAHKGMFVVASNPLALGVLTPPGQFGADIVVGDAQPFGIPAQFGGPHCGYFAVKSALMRKIPGRLVGQTTDEEGRRGFVLTLQAREQHIRRDKATSNICSNQALNALAASVAMTALGKNGVKEMATMNIQKAHYAKEAFVSRGFHVVFEGPFFNEFVIRMNKPIAEVNKKLLEKGIIGGYDLGRNYPELQNCMLIAVTELRTKEEIDTLVKELGDYNA.

Belongs to the GcvP family. N-terminal subunit subfamily. In terms of assembly, the glycine cleavage system is composed of four proteins: P, T, L and H. In this organism, the P 'protein' is a heterodimer of two subunits.

It catalyses the reaction N(6)-[(R)-lipoyl]-L-lysyl-[glycine-cleavage complex H protein] + glycine + H(+) = N(6)-[(R)-S(8)-aminomethyldihydrolipoyl]-L-lysyl-[glycine-cleavage complex H protein] + CO2. The glycine cleavage system catalyzes the degradation of glycine. The P protein binds the alpha-amino group of glycine through its pyridoxal phosphate cofactor; CO(2) is released and the remaining methylamine moiety is then transferred to the lipoamide cofactor of the H protein. This is Probable glycine dehydrogenase (decarboxylating) subunit 1 from Anoxybacillus flavithermus (strain DSM 21510 / WK1).